Consider the following 659-residue polypeptide: tRNA uridine 5-carboxymethylaminomethyl modification enzyme MnmG (659 aa).

13–18 (GGGHAG) serves as a coordination point for FAD. An NAD(+)-binding site is contributed by 281 to 295 (GPRYCPSVEDKINRF).

The protein belongs to the MnmG family. Homodimer. Heterotetramer of two MnmE and two MnmG subunits. The cofactor is FAD.

The protein localises to the cytoplasm. In terms of biological role, NAD-binding protein involved in the addition of a carboxymethylaminomethyl (cmnm) group at the wobble position (U34) of certain tRNAs, forming tRNA-cmnm(5)s(2)U34. The chain is tRNA uridine 5-carboxymethylaminomethyl modification enzyme MnmG from Delftia acidovorans (strain DSM 14801 / SPH-1).